A 684-amino-acid polypeptide reads, in one-letter code: Coiled-coil domain-containing protein 62 (684 aa).

2 coiled-coil regions span residues R11–T160 and T199–A322. The disordered stretch occupies residues S579 to T603. A compositionally biased stretch (polar residues) spans S594–T603. 2 consecutive short sequence motifs (LXXLL motif) follow at residues L634–L638 and L650–L654. Residues S657–Y684 are disordered. Positions E659 to S669 are enriched in polar residues.

In terms of assembly, interacts with ESR1 and ESR2 in the presence of estradiol/E2. The interaction with ESR2 recruits CCDC62 to ER target genes, including cyclin-D1/CCND1 AP-1 promoter. Interacts with GOPC. As to expression, highly expressed in adult testis. Expressed in both prostate epithelial and stromal cells, with predominant expression in epithelial cells (at protein level). Not detected in prostate by RT-PCR. Overexpressed in various cancers.

Its subcellular location is the cytoplasm. It localises to the nucleus. It is found in the cytoplasmic vesicle. The protein resides in the secretory vesicle. The protein localises to the acrosome. In terms of biological role, nuclear receptor coactivator that can enhance preferentially estrogen receptors ESR1 and ESR2 transactivation. Also modulates progesterone/PGR, glucocorticoid/NR3C1 and androgen/AR receptors transactivation, although at lower level; little effect on vitamin D receptor/VDR. Required for normal spermiogenesis. It probably plays a role in acrosome formation. The sequence is that of Coiled-coil domain-containing protein 62 (CCDC62) from Homo sapiens (Human).